A 427-amino-acid polypeptide reads, in one-letter code: Adenylosuccinate synthetase (427 aa).

GTP is bound by residues 12–18 and 40–42; these read GDEGKGK and GHT. Aspartate 13 acts as the Proton acceptor in catalysis. Mg(2+) contacts are provided by aspartate 13 and glycine 40. IMP is bound by residues 13-16, 38-41, threonine 130, arginine 144, glutamine 224, threonine 239, and arginine 303; these read DEGK and NAGH. Histidine 41 serves as the catalytic Proton donor. Residue 299–305 participates in substrate binding; sequence SVTGRPR. GTP contacts are provided by residues arginine 305, 331 to 333, and 411 to 413; these read KLD and SVG.

It belongs to the adenylosuccinate synthetase family. In terms of assembly, homodimer. Mg(2+) is required as a cofactor.

The protein localises to the cytoplasm. It carries out the reaction IMP + L-aspartate + GTP = N(6)-(1,2-dicarboxyethyl)-AMP + GDP + phosphate + 2 H(+). It participates in purine metabolism; AMP biosynthesis via de novo pathway; AMP from IMP: step 1/2. Its function is as follows. Plays an important role in the de novo pathway of purine nucleotide biosynthesis. Catalyzes the first committed step in the biosynthesis of AMP from IMP. This Sorangium cellulosum (strain So ce56) (Polyangium cellulosum (strain So ce56)) protein is Adenylosuccinate synthetase.